Here is a 273-residue protein sequence, read N- to C-terminus: Rhamnulose-1-phosphate aldolase (273 aa).

Glu117 is a catalytic residue. Residues His140, His142, and His211 each contribute to the Zn(2+) site.

The protein belongs to the aldolase class II family. RhaD subfamily. Requires Zn(2+) as cofactor.

The protein localises to the cytoplasm. It carries out the reaction L-rhamnulose 1-phosphate = (S)-lactaldehyde + dihydroxyacetone phosphate. It participates in carbohydrate degradation; L-rhamnose degradation; glycerone phosphate from L-rhamnose: step 3/3. Functionally, catalyzes the reversible cleavage of L-rhamnulose-1-phosphate to dihydroxyacetone phosphate (DHAP) and L-lactaldehyde. The polypeptide is Rhamnulose-1-phosphate aldolase (Listeria monocytogenes serotype 4b (strain CLIP80459)).